The sequence spans 847 residues: Glucans biosynthesis glucosyltransferase H (847 aa).

At 1–139 (MNKTTEYIDA…WRTVGTIRRY (139 aa)) the chain is on the cytoplasmic side. The chain crosses the membrane as a helical span at residues 140-160 (ILLILTLAQTVVATWYMKTIL). Over 161-193 (PYQGWALINPMDMVGQDLWVSFMQLLPYMLQTG) the chain is Periplasmic. The chain crosses the membrane as a helical span at residues 194-214 (ILILFAVLFCWVSAGFWTALM). The Cytoplasmic segment spans residues 215–512 (GFLQLLIGRD…VKGMHPVHRA (298 aa)). Residues 513–533 (VFLTGVMSYLSAPLWFMFLAL) form a helical membrane-spanning segment. At 534–569 (STALQVVHALTEPQYFLQPRQLFPVWPQWRPELAIA) the chain is on the periplasmic side. Residues 570 to 590 (LFASTMVLLFLPKLLSILLIW) form a helical membrane-spanning segment. Residues 591–602 (CKGTKEYGGFWR) are Cytoplasmic-facing. A helical membrane pass occupies residues 603–625 (VTLSLLLEVLFSVLLAPVRMLFH). Topologically, residues 626–679 (TVFVVSAFLGWEVVWNSPQRDDDSTSWGEAFKRHGSQLLLGLVWAVGMAWLDLR) are periplasmic. A helical membrane pass occupies residues 680–700 (FLFWLAPIVFSLILSPFVSVI). Topologically, residues 701–847 (SSRATVGLRT…ALRKPDAASQ (147 aa)) are cytoplasmic.

It belongs to the glycosyltransferase 2 family. OpgH subfamily.

It localises to the cell inner membrane. It functions in the pathway glycan metabolism; osmoregulated periplasmic glucan (OPG) biosynthesis. Involved in the biosynthesis of osmoregulated periplasmic glucans (OPGs). The chain is Glucans biosynthesis glucosyltransferase H (mdoH) from Shigella flexneri.